Reading from the N-terminus, the 121-residue chain is RAAVAADRGIIGGYGLGAPYGLAGGYGLEVPYGLAGYADYRYPAGACGIDAYGGIGEGNVAVAGELPVAGTTAVAGQVPIMGAVKFGGDVCAAGSVSIAGKCACGCGDYGYGYGLGAPYLY.

The protein belongs to the chorion protein family.

In terms of biological role, this protein is one of many from the eggshell of the gypsy moth. The sequence is that of Chorion class A proteins Ld9 from Lymantria dispar (Gypsy moth).